A 920-amino-acid chain; its full sequence is 2-oxoadipate dehydrogenase complex component E1 (920 aa).

The interval 299–322 (QGKTRGRQQVKQDGDYSTDPHSRP) is disordered. Residues 308–322 (VKQDGDYSTDPHSRP) show a composition bias toward basic and acidic residues.

It belongs to the alpha-ketoglutarate dehydrogenase family. The 2-oxoadipate dehydrogenase complex is composed of OADH (2-oxoadipate dehydrogenase; E1a), DLST (dihydrolipoamide succinyltransferase; E2) and DLD (dihydrolipoamide dehydrogenase; E3). E1a functional unit is a dimer. Thiamine diphosphate serves as cofactor.

Its subcellular location is the mitochondrion. The enzyme catalyses N(6)-[(R)-lipoyl]-L-lysyl-[protein] + 2-oxoadipate + H(+) = N(6)-[(R)-S(8)-glutaryldihydrolipoyl]-L-lysyl-[protein] + CO2. The protein operates within amino-acid degradation. Its function is as follows. 2-oxoadipate dehydrogenase (E1a) component of the 2-oxoadipate dehydrogenase complex (OADHC). Participates in the first step, rate limiting for the overall conversion of 2-oxoadipate (alpha-ketoadipate) to glutaryl-CoA and CO(2) catalyzed by the whole OADHC. Catalyzes the irreversible decarboxylation of 2-oxoadipate via the thiamine diphosphate (ThDP) cofactor and subsequent transfer of the decarboxylated acyl intermediate on an oxidized dihydrolipoyl group that is covalently amidated to the E2 enzyme (dihydrolipoyllysine-residue succinyltransferase or DLST). Can catalyze the decarboxylation of 2-oxoglutarate in vitro, but at a much lower rate than 2-oxoadipate. Responsible for the last step of L-lysine, L-hydroxylysine and L-tryptophan catabolism with the common product being 2-oxoadipate. The chain is 2-oxoadipate dehydrogenase complex component E1 (dhtkd1) from Danio rerio (Zebrafish).